The following is a 385-amino-acid chain: Succinyl-diaminopimelate desuccinylase (385 aa).

His78 lines the Zn(2+) pocket. The active site involves Asp80. Asp110 provides a ligand contact to Zn(2+). Glu144 serves as the catalytic Proton acceptor. Zn(2+)-binding residues include Glu145, Glu173, and His358.

This sequence belongs to the peptidase M20A family. DapE subfamily. Homodimer. Zn(2+) is required as a cofactor. It depends on Co(2+) as a cofactor.

It carries out the reaction N-succinyl-(2S,6S)-2,6-diaminopimelate + H2O = (2S,6S)-2,6-diaminopimelate + succinate. It participates in amino-acid biosynthesis; L-lysine biosynthesis via DAP pathway; LL-2,6-diaminopimelate from (S)-tetrahydrodipicolinate (succinylase route): step 3/3. Its function is as follows. Catalyzes the hydrolysis of N-succinyl-L,L-diaminopimelic acid (SDAP), forming succinate and LL-2,6-diaminopimelate (DAP), an intermediate involved in the bacterial biosynthesis of lysine and meso-diaminopimelic acid, an essential component of bacterial cell walls. The polypeptide is Succinyl-diaminopimelate desuccinylase (Gluconacetobacter diazotrophicus (strain ATCC 49037 / DSM 5601 / CCUG 37298 / CIP 103539 / LMG 7603 / PAl5)).